Consider the following 234-residue polypeptide: Probable transcriptional regulatory protein PSPPH_2212 (234 aa).

This sequence belongs to the TACO1 family.

It is found in the cytoplasm. This Pseudomonas savastanoi pv. phaseolicola (strain 1448A / Race 6) (Pseudomonas syringae pv. phaseolicola (strain 1448A / Race 6)) protein is Probable transcriptional regulatory protein PSPPH_2212.